A 1207-amino-acid chain; its full sequence is MKVIDEKPEDEEEEKDSGSKCKTPSSCTKKRVREKEEDLPPICHGWLIVCEGNPTKMMNKEVKLPWHAGYCVFEPRQSTMSCYKQEYPFIAGRMLHRNRTVRMDGDRSAFARHWGLLPEHYPSPPITGPHTIARSYTRPPKDRLPTKERFFSISRIPSRLTKFSTVRGMSIEFFDAIHDETNSGGAQVGGESLDRRGWSGASTGNRTTLTASVHNNLMNGRMSSSSHNLSTRLSGSTQNLNQPTNAYGNLLSRPFRSNPLKRTKSVSKMEKSLAEANQHSLHRVDASNTPSRDSSLYAQPPARRHLSQPAREGSLRACRSHESLLSSAHSTHMIELNEDNRLHPVHPSIFEVPNCFRLASTYYSCRTPLERAKWMENLRKTMNPRRDQQRRTENSMLIWILEAKGLPAKRKYYCEMTLDKTLYAKTSSKARTDNVFWGENFEFMMLPKIDEVCVSLFRESDSKKKKDTLIGYVTIGIDQLSSRSPVERWYTVNTSHSDSGTSRIASALGGKSSSQESPSLRIKARWQSVHILPLRAYDNLLETLCYNYLPLCEQLEPVLNVRDKEDLATSLVRVMYKHNLAKEFLCDLIMKEVEKLDNDHLMFRGNTLATKAMESFMKLVADDYLDSTLSDFIKTVLQCEDSCEVDPQKLGNVSNSSLEKNRALLMRYVEVAWTKILNNVHQLPKNLRDVFSALRCRLEAQNREALADTLISSSIFLRFLCPAILSPSLFNLVSEYPSPTNARNLTLIAKTLQNLANFSKFGGKEPHMEFMNEFVDREWHRMKDFLLRISSESKSGPEKNADAIVDAGKELSLIATYLEEAWTPLLQEKNGNKHPLSNVKSVLSELAECKRRSDNGVFHSPMVQQPSSDYENSPQQHVVPRHENVPAYRSTPPTGQATVLGRSTNRPATHLLTSDDYVLSSAFQTPSLRPGGTRLSDETGTSSSRTSDKTTSSAEIRDDTDSDFELREDRGRGGRNRKRLPRTDASPSSSQQASSGYLSNNPSRSSYSNSSSSSPVERMAALSIANPVFGPGPSSGYAIPAEPKEIVYQKRASPPPYDPDVHNYHYQPMQVYAVPPDCQVSPRTQATGGVNAQNRLSLPRTNPRASRNSTLLRPSVVNVPDDWDRTSDYWRDRGENNYRSQLESQVESQAREIERLMRENIELKSKMMSSTKTVDSKRSDSGASEDSYDSLSSLDRPSRQSLVVVPN.

2 disordered regions span residues 1–29 (MKVIDEKPEDEEEEKDSGSKCKTPSSCTK) and 221–316 (RMSS…GSLR). Positions 40–383 (PPICHGWLIV…WMENLRKTMN (344 aa)) constitute a PH domain. Over residues 223 to 236 (SSSSHNLSTRLSGS) the composition is skewed to low complexity. 2 stretches are compositionally biased toward polar residues: residues 237-247 (TQNLNQPTNAY) and 286-297 (ASNTPSRDSSLY). A C2 domain is found at 374–490 (WMENLRKTMN…SSRSPVERWY (117 aa)). Polar residues predominate over residues 495 to 504 (SHSDSGTSRI). Positions 495-516 (SHSDSGTSRIASALGGKSSSQE) are disordered. Residues 579–789 (NLAKEFLCDL…HRMKDFLLRI (211 aa)) enclose the Ras-GAP domain. Disordered regions lie at residues 856-903 (GVFH…LGRS), 923-1013 (FQTP…SSSS), 1086-1107 (ATGGVNAQNRLSLPRTNPRASR), and 1163-1207 (LKSK…VVPN). 2 stretches are compositionally biased toward polar residues: residues 862–876 (MVQQPSSDYENSPQQ) and 891–903 (TPPTGQATVLGRS). A compositionally biased stretch (low complexity) spans 939–953 (TGTSSSRTSDKTTSS). Positions 955–972 (EIRDDTDSDFELREDRGR) are enriched in basic and acidic residues. The span at 985-1013 (ASPSSSQQASSGYLSNNPSRSSYSNSSSS) shows a compositional bias: low complexity. A compositionally biased stretch (low complexity) spans 1181-1207 (SGASEDSYDSLSSLDRPSRQSLVVVPN).

In terms of tissue distribution, mainly expressed in gonads and vulval cells. Isoform c in expressed in pharyngeal epithelial cells and several rectal/blast cells in the tail region. Isoform f is weakly expressed in four cells symmetrically located in the vulval region. Isoform g is strongly expressed in the pharyngeal muscle cells m6 in addition to several cells in the tail region.

The protein localises to the cytoplasm. Its function is as follows. GTPase-activating protein, which acts as a negative regulator for the member of the Ras family let-60. Probably decreases the signaling activity of Ras by stimulating its intrinsic GTPase activity, thereby lowering the levels of GTP-bound, active Ras. The different isoforms may play a distinct role in specific tissues. The sequence is that of Ras GTPase-activating protein gap-2 (gap-2) from Caenorhabditis elegans.